The following is a 186-amino-acid chain: Potassium-transporting ATPase KdpC subunit (186 aa).

A helical membrane pass occupies residues 10–30 (LTIITMVLCGFLFPLAITLIG).

This sequence belongs to the KdpC family. As to quaternary structure, the system is composed of three essential subunits: KdpA, KdpB and KdpC.

Its subcellular location is the cell membrane. Its function is as follows. Part of the high-affinity ATP-driven potassium transport (or Kdp) system, which catalyzes the hydrolysis of ATP coupled with the electrogenic transport of potassium into the cytoplasm. This subunit acts as a catalytic chaperone that increases the ATP-binding affinity of the ATP-hydrolyzing subunit KdpB by the formation of a transient KdpB/KdpC/ATP ternary complex. This Staphylococcus aureus (strain bovine RF122 / ET3-1) protein is Potassium-transporting ATPase KdpC subunit.